The sequence spans 511 residues: Chromosomal replication initiator protein DnaA (511 aa).

The segment at 1 to 90 (MSVELWQQCV…KRSSAPRAAP (90 aa)) is domain I, interacts with DnaA modulators. A domain II region spans residues 91–174 (NAPLAAAASQ…QVEGALKHTS (84 aa)). The tract at residues 133 to 162 (VAAHDEPSRDSFDPMAGASSQQAPARAEQR) is disordered. Basic and acidic residues predominate over residues 135 to 144 (AHDEPSRDSF). The tract at residues 175–391 (YLNRTFTFEN…GALKRVIAHS (217 aa)) is domain III, AAA+ region. ATP is bound by residues glycine 219, glycine 221, lysine 222, and threonine 223. The segment at 392–511 (HFMGRDITIE…YKNLLRTLTT (120 aa)) is domain IV, binds dsDNA.

The protein belongs to the DnaA family. Oligomerizes as a right-handed, spiral filament on DNA at oriC.

It is found in the cytoplasm. Its function is as follows. Plays an essential role in the initiation and regulation of chromosomal replication. ATP-DnaA binds to the origin of replication (oriC) to initiate formation of the DNA replication initiation complex once per cell cycle. Binds the DnaA box (a 9 base pair repeat at the origin) and separates the double-stranded (ds)DNA. Forms a right-handed helical filament on oriC DNA; dsDNA binds to the exterior of the filament while single-stranded (ss)DNA is stabiized in the filament's interior. The ATP-DnaA-oriC complex binds and stabilizes one strand of the AT-rich DNA unwinding element (DUE), permitting loading of DNA polymerase. After initiation quickly degrades to an ADP-DnaA complex that is not apt for DNA replication. Binds acidic phospholipids. The polypeptide is Chromosomal replication initiator protein DnaA (Pseudomonas savastanoi pv. phaseolicola (strain 1448A / Race 6) (Pseudomonas syringae pv. phaseolicola (strain 1448A / Race 6))).